We begin with the raw amino-acid sequence, 320 residues long: ATP-dependent 6-phosphofructokinase (320 aa).

Glycine 12 lines the ATP pocket. 22-26 (RSVIR) contributes to the ADP binding site. Residues 73–74 (RF) and 103–106 (GDGS) each bind ATP. Mg(2+) is bound at residue aspartate 104. A substrate-binding site is contributed by 126-128 (TID). Aspartate 128 serves as the catalytic Proton acceptor. Arginine 155 is an ADP binding site. Substrate contacts are provided by residues arginine 163 and 170–172 (MGR). ADP-binding positions include 186–188 (GAE) and 214–216 (KRH). Substrate-binding positions include glutamate 223, arginine 244, and 250-253 (HIQR).

Belongs to the phosphofructokinase type A (PFKA) family. ATP-dependent PFK group I subfamily. Prokaryotic clade 'B1' sub-subfamily. As to quaternary structure, homotetramer. Mg(2+) is required as a cofactor.

The protein resides in the cytoplasm. It catalyses the reaction beta-D-fructose 6-phosphate + ATP = beta-D-fructose 1,6-bisphosphate + ADP + H(+). It functions in the pathway carbohydrate degradation; glycolysis; D-glyceraldehyde 3-phosphate and glycerone phosphate from D-glucose: step 3/4. Allosterically activated by ADP and other diphosphonucleosides, and allosterically inhibited by phosphoenolpyruvate. Functionally, catalyzes the phosphorylation of D-fructose 6-phosphate to fructose 1,6-bisphosphate by ATP, the first committing step of glycolysis. In Tolumonas auensis (strain DSM 9187 / NBRC 110442 / TA 4), this protein is ATP-dependent 6-phosphofructokinase.